Here is a 544-residue protein sequence, read N- to C-terminus: Chaperonin GroEL (544 aa).

ATP is bound by residues 29-32, lysine 50, 86-90, glycine 414, and aspartate 494; these read TLGP and DGTTT.

Belongs to the chaperonin (HSP60) family. In terms of assembly, forms a cylinder of 14 subunits composed of two heptameric rings stacked back-to-back. Interacts with the co-chaperonin GroES.

Its subcellular location is the cytoplasm. The catalysed reaction is ATP + H2O + a folded polypeptide = ADP + phosphate + an unfolded polypeptide.. Together with its co-chaperonin GroES, plays an essential role in assisting protein folding. The GroEL-GroES system forms a nano-cage that allows encapsulation of the non-native substrate proteins and provides a physical environment optimized to promote and accelerate protein folding. The sequence is that of Chaperonin GroEL from Amoebophilus asiaticus (strain 5a2).